The chain runs to 465 residues: Uridine kinase-like protein 5 (465 aa).

A uridine kinase region spans residues 26 to 230 (LKQPFVIGVA…IVQHIRTKLC (205 aa)). Residues 240 to 465 (NIFIISSTFQ…SLSTNLKLRS (226 aa)) form a uracil phosphoribosyltransferase region. GTP-binding positions include K264, R273, and 307-310 (CKRL). 5-phospho-alpha-D-ribose 1-diphosphate-binding residues include R317 and R342. Position 362 (R362) interacts with GTP. 5-phospho-alpha-D-ribose 1-diphosphate-binding positions include D368, 373–376 (SGYS), and E439. 438 to 440 (GEF) provides a ligand contact to uracil.

It in the N-terminal section; belongs to the uridine kinase family. In the C-terminal section; belongs to the UPRTase family. Mg(2+) is required as a cofactor.

The catalysed reaction is UMP + diphosphate = 5-phospho-alpha-D-ribose 1-diphosphate + uracil. It catalyses the reaction cytidine + ATP = CMP + ADP + H(+). The enzyme catalyses uridine + ATP = UMP + ADP + H(+). It participates in pyrimidine metabolism; UMP biosynthesis via salvage pathway; UMP from uracil: step 1/1. Its pathway is pyrimidine metabolism; CTP biosynthesis via salvage pathway; CTP from cytidine: step 1/3. The protein operates within pyrimidine metabolism; UMP biosynthesis via salvage pathway; UMP from uridine: step 1/1. Allosterically activated by GTP. Its function is as follows. Involved in the pyrimidine salvage pathway. The sequence is that of Uridine kinase-like protein 5 (UKL5) from Arabidopsis thaliana (Mouse-ear cress).